The chain runs to 579 residues: DNA ligase 1 (579 aa).

Glu244 is an ATP binding site. The active-site N6-AMP-lysine intermediate is Lys246. 6 residues coordinate ATP: Arg251, Arg266, Glu296, Phe342, Arg419, and Lys425.

The protein belongs to the ATP-dependent DNA ligase family. Mg(2+) is required as a cofactor.

The enzyme catalyses ATP + (deoxyribonucleotide)n-3'-hydroxyl + 5'-phospho-(deoxyribonucleotide)m = (deoxyribonucleotide)n+m + AMP + diphosphate.. Its function is as follows. DNA ligase that seals nicks in double-stranded DNA during DNA replication, DNA recombination and DNA repair. In Methanosarcina mazei (strain ATCC BAA-159 / DSM 3647 / Goe1 / Go1 / JCM 11833 / OCM 88) (Methanosarcina frisia), this protein is DNA ligase 1.